A 426-amino-acid chain; its full sequence is Serine hydroxymethyltransferase (426 aa).

(6S)-5,6,7,8-tetrahydrofolate is bound by residues Leu115 and 119–121 (GHI). Lys225 carries the post-translational modification N6-(pyridoxal phosphate)lysine.

Belongs to the SHMT family. As to quaternary structure, homodimer. It depends on pyridoxal 5'-phosphate as a cofactor.

Its subcellular location is the cytoplasm. It participates in amino-acid biosynthesis; glycine biosynthesis; glycine from L-serine: step 1/1. Functionally, catalyzes the reversible interconversion of serine and glycine with a modified folate serving as the one-carbon carrier. Also exhibits a pteridine-independent aldolase activity toward beta-hydroxyamino acids, producing glycine and aldehydes, via a retro-aldol mechanism. In Thermoplasma acidophilum (strain ATCC 25905 / DSM 1728 / JCM 9062 / NBRC 15155 / AMRC-C165), this protein is Serine hydroxymethyltransferase.